Reading from the N-terminus, the 85-residue chain is Toxin Cll7 (85 aa).

An N-terminal signal peptide occupies residues Met1–Ala19. The region spanning Lys20–Gly83 is the LCN-type CS-alpha/beta domain. Cystine bridges form between Cys31/Cys82, Cys35/Cys58, Cys44/Cys63, and Cys48/Cys65.

Belongs to the long (4 C-C) scorpion toxin superfamily. Sodium channel inhibitor family. Beta subfamily. As to expression, expressed by the venom gland.

The protein resides in the secreted. Functionally, beta toxins bind voltage-independently at site-4 of sodium channels (Nav) and shift the voltage of activation toward more negative potentials thereby affecting sodium channel activation and promoting spontaneous and repetitive firing. The chain is Toxin Cll7 from Centruroides limpidus (Mexican scorpion).